We begin with the raw amino-acid sequence, 241 residues long: Large ribosomal subunit protein uL1 (241 aa).

The protein belongs to the universal ribosomal protein uL1 family. In terms of assembly, part of the 50S ribosomal subunit.

In terms of biological role, binds directly to 23S rRNA. The L1 stalk is quite mobile in the ribosome, and is involved in E site tRNA release. Functionally, protein L1 is also a translational repressor protein, it controls the translation of the L11 operon by binding to its mRNA. The protein is Large ribosomal subunit protein uL1 of Streptomyces avermitilis (strain ATCC 31267 / DSM 46492 / JCM 5070 / NBRC 14893 / NCIMB 12804 / NRRL 8165 / MA-4680).